Reading from the N-terminus, the 181-residue chain is ADP-ribosylation factor 1 (181 aa).

Glycine 2 is lipidated: N-myristoyl glycine. GTP contacts are provided by residues glycine 24–threonine 31, aspartate 67–glutamine 71, and asparagine 126–aspartate 129.

This sequence belongs to the small GTPase superfamily. Arf family. In terms of assembly, interacts with AGD7 and GDAP1. GDP-locked form interacts with cytosolic tail of p24 proteins. Interacts with AGD5 at trans-Golgi network. Interacts with A.tumefaciens AK6b.

It is found in the golgi apparatus. It localises to the endosome. Its subcellular location is the trans-Golgi network. The protein resides in the early endosome. The enzyme catalyses GTP + H2O = GDP + phosphate + H(+). Activated by AGD7 and AGD10. GTP-binding protein involved in protein trafficking; required for the sequence-specific vacuolar sorting route to the lytic vacuole, for the ER-to-Golgi transport and for the Golgi-derived transport to the plasma membrane. Involved in the recruitment of COPI and GDAP1 to membranes. Required for recycling of PIN auxin transporters (e.g. PIN1 and PIN2) in a fungal toxin brefeldin A (BFA)-dependent manner. Involved in various auxin-dependent developmental processes. The sequence is that of ADP-ribosylation factor 1 from Arabidopsis thaliana (Mouse-ear cress).